A 95-amino-acid polypeptide reads, in one-letter code: Integration host factor subunit beta (95 aa).

Belongs to the bacterial histone-like protein family. As to quaternary structure, heterodimer of an alpha and a beta chain.

Functionally, this protein is one of the two subunits of integration host factor, a specific DNA-binding protein that functions in genetic recombination as well as in transcriptional and translational control. The polypeptide is Integration host factor subunit beta (Colwellia psychrerythraea (strain 34H / ATCC BAA-681) (Vibrio psychroerythus)).